Consider the following 126-residue polypeptide: RutC family protein SSO3206 (126 aa).

Belongs to the RutC family.

The polypeptide is RutC family protein SSO3206 (Saccharolobus solfataricus (strain ATCC 35092 / DSM 1617 / JCM 11322 / P2) (Sulfolobus solfataricus)).